Consider the following 905-residue polypeptide: MISSKVAPGEEEEQQEAPAEVAPAEEELRETEGQLEAVPPDEASPSWATGPPLERLPPVGQEAPPPRRCHTDCLEAPLSSCFLRLGALVGANPWLFLLGPVLLTASLGTGLIFLPKEKENLEEQYTPIGSPAKAERRFVQSHFSTNDSYRFSASRTSSETNFASILVVSHRDSLLEPEAFAEVSRLDRAVQALKVVQENGTQILYPEVCAKYSVGCVPPNPLLFSWQQNSSLNLSELTFPIHSVADHLIHLAGFFGGNVLGYATTGNRQRLVESRAMRLLYYLKTEDPEDRERSQAWLTHFLDHFNDMKSDLALEDIEVVYFTSLSRQLEFEATSKTVIPLFHLAYILIILFAVVSCSRLDCIRNKMWVAVFGVFSVAMSVVSGFGLMLHIGVPFVIIVANSPFLILGVGVDDMFIMISAWQKTSLTESVSERLSNSYSKVAVSITITTITNVLAFYTGITSSFRSVQYFCIYTGTTLLFCYFYSITCFGAIMALDGKREVVWSRWLEKPDQKYSSFKKFCCVPFGSFPDEHGDDNHPMNLFFRDYFGPFLTTSKAKFIVVLIYIFYIISSIYGCFQVQEGLDLRNLASDDSYITPYFNVEEDYFSDYGPRVMVIVTETVNYWDKDVRQKLDKCMTQFEQNEYVDKNLTEFWLEAYMQYMNNTGNNPNDKNTFMNNIAGFLNFFPVFTYDINVSSSNEITSSRGFIQTIDVSSSSNKKRMLLKLRGIAENCEVPLMVYNQAFIYFDQYAAIIENTVRNVMIASTAMFIVSLLLIPHPVCSLWVTFAIASVIVGVTGFMAFWNVNLDSISMINLVICIGFSFDFSAHISYAFVSSNEPSVNKKSIEALYLLGYPVLQSAISTIIGVCVLAAAKAYIFRTFFKIMFLVMFFGAAHGLIFIPVFLTFF.

The interval 1-67 (MISSKVAPGE…PVGQEAPPPR (67 aa)) is disordered. A helical transmembrane segment spans residues 94-114 (WLFLLGPVLLTASLGTGLIFL). 4 N-linked (GlcNAc...) asparagine glycosylation sites follow: Asn-146, Asn-199, Asn-229, and Asn-233. 6 consecutive transmembrane segments (helical) span residues 337–357 (TVIP…VVSC), 369–389 (VAVF…GLML), 391–411 (IGVP…GVGV), 441–461 (VAVS…TGIT), 475–495 (GTTL…IMAL), and 558–578 (FIVV…CFQV). Positions 338–495 (VIPLFHLAYI…ITCFGAIMAL (158 aa)) constitute an SSD domain. 3 N-linked (GlcNAc...) asparagine glycosylation sites follow: Asn-647, Asn-661, and Asn-692. 5 helical membrane passes run 759 to 779 (VMIA…HPVC), 781 to 801 (LWVT…MAFW), 813 to 833 (LVIC…AFVS), 849 to 869 (LLGY…CVLA), and 882 to 902 (IMFL…PVFL).

The protein belongs to the patched family. In terms of tissue distribution, expressed in germ cells of the testis (at protein level).

The protein localises to the cell projection. Its subcellular location is the cilium. It is found in the flagellum membrane. The protein resides in the endoplasmic reticulum membrane. Its function is as follows. May play a role in sperm development or sperm function. However, does not appear to have an essential role in spermatogenesis or male fertility. This is Patched domain-containing protein 3 from Rattus norvegicus (Rat).